A 458-amino-acid chain; its full sequence is Opine oxidase subunit A (458 aa).

The protein to T-protein and to dimethylglycine dehydrogenase. Heterodimer of a subunit A and a subunit B.

Its pathway is opine metabolism; octopine degradation. Functionally, oxidative cleavage of octopine into L-arginine and pyruvate. The sequence is that of Opine oxidase subunit A (ooxA) from Rhizobium meliloti (strain 1021) (Ensifer meliloti).